Reading from the N-terminus, the 255-residue chain is 5'-nucleotidase SurE (255 aa).

Positions 7, 8, 38, and 90 each coordinate a divalent metal cation.

This sequence belongs to the SurE nucleotidase family. A divalent metal cation serves as cofactor.

The protein localises to the cytoplasm. It catalyses the reaction a ribonucleoside 5'-phosphate + H2O = a ribonucleoside + phosphate. Nucleotidase that shows phosphatase activity on nucleoside 5'-monophosphates. The chain is 5'-nucleotidase SurE from Picrophilus torridus (strain ATCC 700027 / DSM 9790 / JCM 10055 / NBRC 100828 / KAW 2/3).